We begin with the raw amino-acid sequence, 354 residues long: Src kinase-associated phosphoprotein 1 (354 aa).

Residues 107–210 enclose the PH domain; that stretch reads NVIKQGYLEK…WVDQISFLLK (104 aa). Tyr142 and Tyr236 each carry phosphotyrosine. 2 positions are modified to phosphotyrosine; by FYN: Tyr267 and Tyr290. Residues 285–290 are interaction with FYB1; sequence RRRVDY. The SH3 domain occupies 289–350; it reads DYADYYQGLW…PKDYLTTAFE (62 aa).

Belongs to the SKAP family. Homodimer. Interacts with FYN. Interacts with PTPRC. Interacts with GRB2 when phosphorylated on Tyr-267. Interacts with FYB1, which is required for SKAP2 protein stability. Part of a complex consisting of SKAP1, FYB1 and CLNK. Interacts with RASGRP1. Interacts with FYB2. In terms of processing, phosphorylated on tyrosines. Phosphorylation by FYN on Tyr-267 is required for GRB2 interaction. Phosphorylation by FYN on Tyr-290 abolishes interaction with FYB1. Tyr-236 is dephosphorylated by PTPRC. As to expression, expressed in mast cells (at protein level).

The protein resides in the cytoplasm. It localises to the nucleus. Its subcellular location is the cell membrane. Its function is as follows. Positively regulates T-cell receptor signaling by enhancing the MAP kinase pathway. Required for optimal conjugation between T-cells and antigen-presenting cells by promoting the clustering of integrin ITGAL on the surface of T-cells. May be involved in high affinity immunoglobulin epsilon receptor signaling in mast cells. This is Src kinase-associated phosphoprotein 1 (Skap1) from Rattus norvegicus (Rat).